We begin with the raw amino-acid sequence, 333 residues long: MIERIWSGKSWCYLLLLPFSWLYGAISLFRRFAYKQGWLSSWKSPVPVVVVGNLTAGGNGKTPVVIWLVEQLKAQGFKPAVVSRGYGGKSDQYPLLLSPETQPAVAGDEPVLIYHRTGVPVAVAPSRSDAVKALLAQYDLDIIITDDGLQHYALQRDYEIVVIDGQRRFGNGWWLPAGPMRERAHRLDSVNAVIVNGGDCQANEIAMSLEGEIAVNLKTGEKKAITELGNAVAMAGIGHPPRFFNSLQDKGVKLIATKAFNDHSEYTLQELQILTPHQEPLIMTEKDAVKCQHFAQNNWWYLPVSAVLEDLSVLNQVSQLVTTRKKLVYDLKQ.

An ATP-binding site is contributed by 55–62 (TAGGNGKT).

The protein belongs to the LpxK family.

The catalysed reaction is a lipid A disaccharide + ATP = a lipid IVA + ADP + H(+). Its pathway is glycolipid biosynthesis; lipid IV(A) biosynthesis; lipid IV(A) from (3R)-3-hydroxytetradecanoyl-[acyl-carrier-protein] and UDP-N-acetyl-alpha-D-glucosamine: step 6/6. In terms of biological role, transfers the gamma-phosphate of ATP to the 4'-position of a tetraacyldisaccharide 1-phosphate intermediate (termed DS-1-P) to form tetraacyldisaccharide 1,4'-bis-phosphate (lipid IVA). This is Tetraacyldisaccharide 4'-kinase from Proteus mirabilis (strain HI4320).